A 454-amino-acid chain; its full sequence is Adenosylmethionine-8-amino-7-oxononanoate aminotransferase (454 aa).

119–120 (GA) contributes to the pyridoxal 5'-phosphate binding site. Tyr-152 serves as a coordination point for substrate. Asp-257 lines the pyridoxal 5'-phosphate pocket. Residues Lys-286, Gly-321, and Arg-416 each coordinate substrate. Lys-286 carries the post-translational modification N6-(pyridoxal phosphate)lysine.

It belongs to the class-III pyridoxal-phosphate-dependent aminotransferase family. BioA subfamily. In terms of assembly, homodimer. Pyridoxal 5'-phosphate serves as cofactor.

Its subcellular location is the cytoplasm. The enzyme catalyses (8S)-8-amino-7-oxononanoate + S-adenosyl-L-methionine = S-adenosyl-4-methylsulfanyl-2-oxobutanoate + (7R,8S)-7,8-diammoniononanoate. The protein operates within cofactor biosynthesis; biotin biosynthesis; 7,8-diaminononanoate from 8-amino-7-oxononanoate (SAM route): step 1/1. Its function is as follows. Catalyzes the transfer of the alpha-amino group from S-adenosyl-L-methionine (SAM) to 7-keto-8-aminopelargonic acid (KAPA) to form 7,8-diaminopelargonic acid (DAPA). It is the only aminotransferase known to utilize SAM as an amino donor. The sequence is that of Adenosylmethionine-8-amino-7-oxononanoate aminotransferase from Anoxybacillus flavithermus (strain DSM 21510 / WK1).